The following is a 156-amino-acid chain: Small ribosomal subunit protein uS7 (156 aa).

This sequence belongs to the universal ribosomal protein uS7 family. In terms of assembly, part of the 30S ribosomal subunit. Contacts proteins S9 and S11.

Its function is as follows. One of the primary rRNA binding proteins, it binds directly to 16S rRNA where it nucleates assembly of the head domain of the 30S subunit. Is located at the subunit interface close to the decoding center, probably blocks exit of the E-site tRNA. This is Small ribosomal subunit protein uS7 from Cupriavidus necator (strain ATCC 17699 / DSM 428 / KCTC 22496 / NCIMB 10442 / H16 / Stanier 337) (Ralstonia eutropha).